A 61-amino-acid chain; its full sequence is Conotoxin Vn5.3 (61 aa).

Residues 1–19 form the signal peptide; the sequence is MHCLPVFVILLLLIASAPG. A propeptide spanning residues 20–50 is cleaved from the precursor; sequence VDVQPKTKNFMTRASLRDFAKKTPKRLSKLR.

This sequence belongs to the conotoxin T superfamily. Contains 2 disulfide bonds that can be either 'C1-C3, C2-C4' or 'C1-C4, C2-C3', since these disulfide connectivities have been observed for conotoxins with cysteine framework V (for examples, see AC P0DQQ7 and AC P81755). Expressed by the venom duct.

It localises to the secreted. The polypeptide is Conotoxin Vn5.3 (Conus ventricosus (Mediterranean cone)).